We begin with the raw amino-acid sequence, 465 residues long: Alpha-galacturonidase (465 aa).

An NAD(+)-binding site is contributed by 11 to 78 (ITIAYIGGGS…GKWLYKACET (68 aa)). Asn157 serves as a coordination point for substrate. Mn(2+) is bound at residue Cys179. His180 functions as the Proton donor in the catalytic mechanism. Mn(2+) is bound at residue His216.

This sequence belongs to the glycosyl hydrolase 4 family. Homotetramer. NAD(+) serves as cofactor. The cofactor is Mn(2+).

It catalyses the reaction [(1-&gt;4)-alpha-D-galacturonosyl](n) + H2O = alpha-D-galacturonate + [(1-&gt;4)-alpha-D-galacturonosyl](n-1). Its function is as follows. Alpha-galacturonidase able to catalyze the hydrolysis of the chromogenic substrate p-nitrophenyl-alpha-D-galacturonic acid (pNPalphaGalUA). It is probable that alpha-1,4-di-galacturonate (GalUA(2)) is the naturally occurring substrate. In Thermoanaerobacterium saccharolyticum (strain DSM 8691 / JW/SL-YS485), this protein is Alpha-galacturonidase.